The sequence spans 87 residues: Small ribosomal subunit protein bS20 (87 aa).

The disordered stretch occupies residues 1–24 (MANTAQARKRARQSVERNKHNSSL).

Belongs to the bacterial ribosomal protein bS20 family.

In terms of biological role, binds directly to 16S ribosomal RNA. The polypeptide is Small ribosomal subunit protein bS20 (Bordetella avium (strain 197N)).